The sequence spans 201 residues: Recombination protein RecR (201 aa).

The segment at 59–74 (CEICGNMDTENMCRIC) adopts a C4-type zinc-finger fold. The Toprim domain maps to 82 to 177 (SIIAIVETVA…KISRLASGIP (96 aa)).

Belongs to the RecR family.

Its function is as follows. May play a role in DNA repair. It seems to be involved in an RecBC-independent recombinational process of DNA repair. It may act with RecF and RecO. This Rickettsia conorii (strain ATCC VR-613 / Malish 7) protein is Recombination protein RecR.